Reading from the N-terminus, the 190-residue chain is Putative manganese efflux pump MntP (190 aa).

6 consecutive transmembrane segments (helical) span residues 3 to 23 (PASI…AAVG), 39 to 59 (IGLI…FIGQ), 65 to 85 (VANW…LHMI), 106 to 128 (WLLA…GLAF), 133 to 155 (IWVA…VMLG), and 157 to 177 (AIGT…LIIV).

The protein belongs to the MntP (TC 9.B.29) family.

It is found in the cell inner membrane. Probably functions as a manganese efflux pump. The chain is Putative manganese efflux pump MntP from Pseudomonas fluorescens (strain ATCC BAA-477 / NRRL B-23932 / Pf-5).